The primary structure comprises 456 residues: uncharacterized protein (456 aa).

The TRAM domain occupies 5–63 (LVKKGQQISLKIKRLGINGEGIGYYKKLIIFVPGALPKEEVTATITNVTPKFAEGTLQS). Cys76, Cys82, Cys85, and Cys165 together coordinate [4Fe-4S] cluster. Residues Gln289, Tyr318, Asp339, and Asp387 each contribute to the S-adenosyl-L-methionine site. Catalysis depends on Cys414, which acts as the Nucleophile.

Belongs to the class I-like SAM-binding methyltransferase superfamily. RNA M5U methyltransferase family.

This is an uncharacterized protein from Enterococcus faecalis (strain ATCC 700802 / V583).